The primary structure comprises 91 residues: Alpha-defensin-related sequence 2 (91 aa).

The signal sequence occupies residues 1-19; that stretch reads MKKLVLLFALVLLAFQVQA. Residues 20-58 constitute a propeptide that is removed on maturation; the sequence is DSIQNTDEETKTEEQPGEKDQAVSVSFGDPQGSALQDAA. A disordered region spans residues 22-48; the sequence is IQNTDEETKTEEQPGEKDQAVSVSFGD. Residues 27-40 are compositionally biased toward basic and acidic residues; it reads EETKTEEQPGEKDQ. A run of 7 repeats spans residues 65-67, 68-70, 71-73, 74-76, 77-79, 80-82, and 83-85. A 7 X 3 AA tandem repeats of C-P-X region spans residues 65–85; it reads CPQCPRCPSCPSCPRCPRCPR.

It belongs to the alpha-defensin family. As to expression, small bowel, spleen, colon, kidney, liver, stomach and femur marrow.

The protein resides in the secreted. Apparent precursor of a secreted, cationic, proline- and cysteine-rich peptide that contains Cys-Pro-Xaa repeats. Unlike cryptdin, the proposed mature peptide region lacks the structural motif characteristic of defensins. It may have microbicidal activities. This is Alpha-defensin-related sequence 2 (Defa-rs2) from Mus musculus (Mouse).